A 542-amino-acid polypeptide reads, in one-letter code: Chaperonin GroEL 2 (542 aa).

ATP-binding positions include 30–33, K51, 87–91, G415, and D496; these read TLGP and DGTTT.

The protein belongs to the chaperonin (HSP60) family. As to quaternary structure, forms a cylinder of 14 subunits composed of two heptameric rings stacked back-to-back. Interacts with the co-chaperonin GroES.

It is found in the cytoplasm. It carries out the reaction ATP + H2O + a folded polypeptide = ADP + phosphate + an unfolded polypeptide.. In terms of biological role, together with its co-chaperonin GroES, plays an essential role in assisting protein folding. The GroEL-GroES system forms a nano-cage that allows encapsulation of the non-native substrate proteins and provides a physical environment optimized to promote and accelerate protein folding. The polypeptide is Chaperonin GroEL 2 (Chelativorans sp. (strain BNC1)).